The sequence spans 153 residues: 6,7-dimethyl-8-ribityllumazine synthase (153 aa).

5-amino-6-(D-ribitylamino)uracil is bound by residues Phe22, 56–58 (AFE), and 80–82 (AVI). 85-86 (AT) contributes to the (2S)-2-hydroxy-3-oxobutyl phosphate binding site. His88 serves as the catalytic Proton donor. Position 113 (Phe113) interacts with 5-amino-6-(D-ribitylamino)uracil. Residue Arg127 participates in (2S)-2-hydroxy-3-oxobutyl phosphate binding.

Belongs to the DMRL synthase family.

It carries out the reaction (2S)-2-hydroxy-3-oxobutyl phosphate + 5-amino-6-(D-ribitylamino)uracil = 6,7-dimethyl-8-(1-D-ribityl)lumazine + phosphate + 2 H2O + H(+). Its pathway is cofactor biosynthesis; riboflavin biosynthesis; riboflavin from 2-hydroxy-3-oxobutyl phosphate and 5-amino-6-(D-ribitylamino)uracil: step 1/2. Functionally, catalyzes the formation of 6,7-dimethyl-8-ribityllumazine by condensation of 5-amino-6-(D-ribitylamino)uracil with 3,4-dihydroxy-2-butanone 4-phosphate. This is the penultimate step in the biosynthesis of riboflavin. This is 6,7-dimethyl-8-ribityllumazine synthase from Clostridium tetani (strain Massachusetts / E88).